Here is a 190-residue protein sequence, read N- to C-terminus: Peptidyl-prolyl cis-trans isomerase A (190 aa).

The signal sequence occupies residues methionine 1–alanine 24. A PPIase cyclophilin-type domain is found at glycine 27–valine 188.

It belongs to the cyclophilin-type PPIase family.

It localises to the periplasm. The catalysed reaction is [protein]-peptidylproline (omega=180) = [protein]-peptidylproline (omega=0). Its function is as follows. PPIases accelerate the folding of proteins. It catalyzes the cis-trans isomerization of proline imidic peptide bonds in oligopeptides. The sequence is that of Peptidyl-prolyl cis-trans isomerase A (ppiA) from Salmonella typhimurium (strain LT2 / SGSC1412 / ATCC 700720).